The primary structure comprises 343 residues: Ferrochelatase (343 aa).

Fe cation contacts are provided by histidine 211 and glutamate 292.

The protein belongs to the ferrochelatase family.

It is found in the cytoplasm. The enzyme catalyses heme b + 2 H(+) = protoporphyrin IX + Fe(2+). It participates in porphyrin-containing compound metabolism; protoheme biosynthesis; protoheme from protoporphyrin-IX: step 1/1. Functionally, catalyzes the ferrous insertion into protoporphyrin IX. The chain is Ferrochelatase from Gluconobacter oxydans (strain 621H) (Gluconobacter suboxydans).